We begin with the raw amino-acid sequence, 92 residues long: Small ribosomal subunit protein bS20 (92 aa).

The disordered stretch occupies residues 1–23 (MANTPSAKKRAKQAEKRRSHNAS). A compositionally biased stretch (basic residues) spans 7–20 (AKKRAKQAEKRRSH).

The protein belongs to the bacterial ribosomal protein bS20 family.

Functionally, binds directly to 16S ribosomal RNA. The polypeptide is Small ribosomal subunit protein bS20 (Pseudomonas fluorescens (strain SBW25)).